Consider the following 192-residue polypeptide: GTP cyclohydrolase-2 (192 aa).

A GTP-binding site is contributed by 47–51 (RIHSE). The Zn(2+) site is built by Cys52, Cys63, and Cys65. GTP is bound by residues Gln68, 90–92 (EGR), and Thr112. The active-site Proton acceptor is the Asp124. The Nucleophile role is filled by Arg126. GTP-binding residues include Thr147 and Lys152.

The protein belongs to the GTP cyclohydrolase II family. Requires Zn(2+) as cofactor.

The catalysed reaction is GTP + 4 H2O = 2,5-diamino-6-hydroxy-4-(5-phosphoribosylamino)-pyrimidine + formate + 2 phosphate + 3 H(+). It functions in the pathway cofactor biosynthesis; riboflavin biosynthesis; 5-amino-6-(D-ribitylamino)uracil from GTP: step 1/4. In terms of biological role, catalyzes the conversion of GTP to 2,5-diamino-6-ribosylamino-4(3H)-pyrimidinone 5'-phosphate (DARP), formate and pyrophosphate. The sequence is that of GTP cyclohydrolase-2 from Picrophilus torridus (strain ATCC 700027 / DSM 9790 / JCM 10055 / NBRC 100828 / KAW 2/3).